Consider the following 386-residue polypeptide: Succinate--CoA ligase [ADP-forming] subunit beta (386 aa).

One can recognise an ATP-grasp domain in the interval 9 to 244; sequence KEILRKYGVP…HDEEDPLETR (236 aa). ATP-binding positions include Lys-46, 53 to 55, Glu-99, Cys-102, and Glu-107; that span reads GRG. 2 residues coordinate Mg(2+): Asn-199 and Asp-213. Substrate contacts are provided by residues Asn-264 and 321–323; that span reads GIM.

Belongs to the succinate/malate CoA ligase beta subunit family. Heterotetramer of two alpha and two beta subunits. It depends on Mg(2+) as a cofactor.

It catalyses the reaction succinate + ATP + CoA = succinyl-CoA + ADP + phosphate. It carries out the reaction GTP + succinate + CoA = succinyl-CoA + GDP + phosphate. The protein operates within carbohydrate metabolism; tricarboxylic acid cycle; succinate from succinyl-CoA (ligase route): step 1/1. Its function is as follows. Succinyl-CoA synthetase functions in the citric acid cycle (TCA), coupling the hydrolysis of succinyl-CoA to the synthesis of either ATP or GTP and thus represents the only step of substrate-level phosphorylation in the TCA. The beta subunit provides nucleotide specificity of the enzyme and binds the substrate succinate, while the binding sites for coenzyme A and phosphate are found in the alpha subunit. The chain is Succinate--CoA ligase [ADP-forming] subunit beta from Rickettsia typhi (strain ATCC VR-144 / Wilmington).